The chain runs to 420 residues: Histidine--tRNA ligase (420 aa).

The protein belongs to the class-II aminoacyl-tRNA synthetase family. Homodimer.

It localises to the cytoplasm. The enzyme catalyses tRNA(His) + L-histidine + ATP = L-histidyl-tRNA(His) + AMP + diphosphate + H(+). The polypeptide is Histidine--tRNA ligase (Saccharopolyspora erythraea (strain ATCC 11635 / DSM 40517 / JCM 4748 / NBRC 13426 / NCIMB 8594 / NRRL 2338)).